Here is a 552-residue protein sequence, read N- to C-terminus: MVAAPISTVKLTDANLHTRFHSSSSSTPSTLSLPLSLHFHFSSHSKRFSSIRCQSVNGEKRKQSSRNVFDNASNLLTSLLSGANLGSMPIAEGAVTDLFDRPLFFSLYDWFLEHGSVYKLAFGPKAFVVVSDPIVARHILRENAFSYDKGVLADILEPIMGKGLIPADLETWKQRRRVIAPGFHTSYLEAMVQLFTSCSERTVLKVNELLEGEGRDGQKSVELDLEAEFSNLALEIIGLGVFNYDFGSVTNESPVIKAVYGTLFEAEHRSTFYIPYWKFPLARWIVPRQRKFQDDLKVINTCLDGLIRNAKESRQETDVEKLQQRDYSNLKDASLLRFLVDMRGVDVDDRQLRDDLMTMLIAGHETTAAVLTWAVFLLAQNPDKMKKAQAEVDLVLGMGKPTFELLKKLEYIRLIVVETLRLYPQPPLLIRRSLKPDVLPGGHKGDKDGYTIPAGTDVFISVYNLHRSPYFWDRPNDFEPERFLVQNNNEEVEGWAGFDPSRSPGALYPNEIISDFAFLPFGGGPRKCVGDQFALMESTVALVCCYRISMWN.

The transit peptide at 1 to 52 (MVAAPISTVKLTDANLHTRFHSSSSSTPSTLSLPLSLHFHFSSHSKRFSSIR) directs the protein to the chloroplast. Position 528 (Cys-528) interacts with heme.

Belongs to the cytochrome P450 family. Requires heme as cofactor.

The protein resides in the plastid. The protein localises to the chloroplast membrane. In Pisum sativum (Garden pea), this protein is Cytochrome P450 97B1, chloroplastic (CYP97B1).